The primary structure comprises 538 residues: Putative cysteine ligase BshC (538 aa).

A coiled-coil region spans residues 460–484; it reads KINEQIELLERMLKRNVEKKHEVEL.

Belongs to the BshC family.

Its function is as follows. Involved in bacillithiol (BSH) biosynthesis. May catalyze the last step of the pathway, the addition of cysteine to glucosamine malate (GlcN-Mal) to generate BSH. The protein is Putative cysteine ligase BshC of Bacillus cereus (strain ZK / E33L).